A 555-amino-acid polypeptide reads, in one-letter code: Intraflagellar transport protein 56 (555 aa).

TPR repeat units lie at residues leucine 57–aspartate 90, isoleucine 151–tyrosine 184, and aspartate 393–asparagine 426.

It belongs to the IFT56 family. Component of the IFT complex B.

It is found in the cell projection. The protein resides in the cilium. Its subcellular location is the flagellum. Its function is as follows. Component of the intraflagellar transport (IFT) complex B required for transport of proteins in the motile cilium. Required for transport of specific ciliary cargo proteins related to motility, while it is neither required for IFT complex B assembly or motion nor for cilium assembly. This is Intraflagellar transport protein 56 from Chlamydomonas reinhardtii (Chlamydomonas smithii).